The following is a 360-amino-acid chain: Hyaluronan and proteoglycan link protein 3 (360 aa).

The first 17 residues, 1 to 17, serve as a signal peptide directing secretion; sequence MGLLLLVPLLLLPGSYG. One can recognise an Ig-like V-type domain in the interval 48 to 164; it reads KLVVETPEET…ESGLVELELR (117 aa). 5 cysteine pairs are disulfide-bonded: C70/C146, C188/C259, C212/C233, C286/C356, and C311/C332. Link domains lie at 166–261 and 266–358; these read VVFP…FCFA and GRVY…YCYR.

This sequence belongs to the HAPLN family. In terms of tissue distribution, widely expressed with highest levels in spleen and placenta.

It is found in the secreted. The protein localises to the extracellular space. It localises to the extracellular matrix. Its function is as follows. May function in hyaluronic acid binding. In Homo sapiens (Human), this protein is Hyaluronan and proteoglycan link protein 3 (HAPLN3).